A 511-amino-acid polypeptide reads, in one-letter code: Histidine ammonia-lyase (511 aa).

Positions 142–144 (ASG) form a cross-link, 5-imidazolinone (Ala-Gly). The residue at position 143 (Ser-143) is a 2,3-didehydroalanine (Ser).

It belongs to the PAL/histidase family. Contains an active site 4-methylidene-imidazol-5-one (MIO), which is formed autocatalytically by cyclization and dehydration of residues Ala-Ser-Gly.

It localises to the cytoplasm. It carries out the reaction L-histidine = trans-urocanate + NH4(+). It functions in the pathway amino-acid degradation; L-histidine degradation into L-glutamate; N-formimidoyl-L-glutamate from L-histidine: step 1/3. The sequence is that of Histidine ammonia-lyase from Rhizobium rhizogenes (Agrobacterium rhizogenes).